A 790-amino-acid polypeptide reads, in one-letter code: Probable E3 ubiquitin-protein ligase MARCHF10 (790 aa).

Positions 33-240 are disordered; that stretch reads LKRQEHKKEP…PQNEPHTALS (208 aa). Over residues 34–48 the composition is skewed to basic and acidic residues; it reads KRQEHKKEPNEKKQE. The segment covering 61 to 70 has biased composition (low complexity); it reads FSSGSSCKQS. Position 78 is a phosphoserine (Ser-78). The span at 218–227 shows a compositional bias: basic and acidic residues; sequence PLERQKKGDP. Residues 230–240 are compositionally biased toward polar residues; the sequence is RPQNEPHTALS. A coiled-coil region spans residues 284 to 308; sequence LSLNNEQENYDTEEETRTEEELLLA. 2 disordered regions span residues 323–416 and 507–569; these read GTSA…EDVS and LSPI…RHLQ. Composition is skewed to polar residues over residues 355-370, 406-416, and 511-520; these read RKTS…SSPG, GVTQVSAEDVS, and RNRNPSAASE. A compositionally biased stretch (basic and acidic residues) spans 521-533; sequence SHSEDTQGEEERA. A compositionally biased stretch (polar residues) spans 534 to 563; sequence STSQAQESPLLSDLPNPQSSMALGDSPSSP. Residues 633-703 form an RING-CH-type zinc finger; it reads DSEEEGDLCR…EMCKQGLLVD (71 aa). Zn(2+)-binding residues include Cys-641, Cys-644, Cys-659, Cys-661, His-669, Cys-672, Cys-693, and Cys-696. A disordered region spans residues 757–790; sequence ERMSRNYPQPRPEESESSESGDGNESNVYPGRVI. Residues 774 to 783 are compositionally biased toward low complexity; sequence SESGDGNESN.

It catalyses the reaction S-ubiquitinyl-[E2 ubiquitin-conjugating enzyme]-L-cysteine + [acceptor protein]-L-lysine = [E2 ubiquitin-conjugating enzyme]-L-cysteine + N(6)-ubiquitinyl-[acceptor protein]-L-lysine.. The protein operates within protein modification; protein ubiquitination. Functionally, E3 ubiquitin-protein ligase. E3 ubiquitin ligases accept ubiquitin from an E2 ubiquitin-conjugating enzyme in the form of a thioester and then directly transfer the ubiquitin to targeted substrates. The protein is Probable E3 ubiquitin-protein ligase MARCHF10 (Marchf10) of Rattus norvegicus (Rat).